Consider the following 139-residue polypeptide: Nucleoside diphosphate kinase (139 aa).

Lysine 10, phenylalanine 58, arginine 86, threonine 92, arginine 104, and asparagine 114 together coordinate ATP. The active-site Pros-phosphohistidine intermediate is histidine 117.

It belongs to the NDK family. As to quaternary structure, homotetramer. The cofactor is Mg(2+).

The protein resides in the cytoplasm. The enzyme catalyses a 2'-deoxyribonucleoside 5'-diphosphate + ATP = a 2'-deoxyribonucleoside 5'-triphosphate + ADP. It catalyses the reaction a ribonucleoside 5'-diphosphate + ATP = a ribonucleoside 5'-triphosphate + ADP. Its function is as follows. Major role in the synthesis of nucleoside triphosphates other than ATP. The ATP gamma phosphate is transferred to the NDP beta phosphate via a ping-pong mechanism, using a phosphorylated active-site intermediate. This chain is Nucleoside diphosphate kinase, found in Nocardia farcinica (strain IFM 10152).